The sequence spans 469 residues: Cytoplasmic tRNA 2-thiolation protein 2 (469 aa).

The protein belongs to the CTU2/NCS2 family.

The protein resides in the cytoplasm. It functions in the pathway tRNA modification; 5-methoxycarbonylmethyl-2-thiouridine-tRNA biosynthesis. Plays a central role in 2-thiolation of mcm(5)S(2)U at tRNA wobble positions of tRNA(Lys), tRNA(Glu) and tRNA(Gln). May act by forming a heterodimer with NCS6 that ligates sulfur from thiocarboxylated URM1 onto the uridine of tRNAs at wobble position. Prior mcm(5) tRNA modification by the elongator complex is required for 2-thiolation. May also be involved in protein urmylation. The protein is Cytoplasmic tRNA 2-thiolation protein 2 of Candida glabrata (strain ATCC 2001 / BCRC 20586 / JCM 3761 / NBRC 0622 / NRRL Y-65 / CBS 138) (Yeast).